The primary structure comprises 1399 residues: Dicer-like protein 2 (1399 aa).

One can recognise a Helicase ATP-binding domain in the interval 18 to 194 (MVEESMQSNI…EDLQQIERNL (177 aa)). ATP is bound at residue 31–38 (MDTGSGKT). A DEAH box motif is present at residues 139-142 (DEAH). One can recognise a Helicase C-terminal domain in the interval 364–549 (KLQLLIKFLV…QSETGHRNFE (186 aa)). The Dicer dsRNA-binding fold domain occupies 562-656 (ASQHLHHFCS…LPARQEADDE (95 aa)). 2 consecutive RNase III domains span residues 897-1054 (LPSI…TVGG) and 1094-1270 (LDVL…IDSL). Glutamate 1133, aspartate 1256, and glutamate 1259 together coordinate Mg(2+). Residues 1301–1370 (HPKERLGHLA…AWKAVGVLES (70 aa)) enclose the DRBM domain.

The protein belongs to the helicase family. Dicer subfamily. Mg(2+) is required as a cofactor. Requires Mn(2+) as cofactor.

Its function is as follows. Dicer-like endonuclease involved in cleaving double-stranded RNA in the RNA interference (RNAi) pathway. Produces 21 to 25 bp dsRNAs (siRNAs) which target the selective destruction of homologous RNAs leading to sequence-specific suppression of gene expression, called post-transcriptional gene silencing (PTGS). Part of a broad host defense response against viral infection and transposons. This chain is Dicer-like protein 2 (DCL2), found in Phaeosphaeria nodorum (strain SN15 / ATCC MYA-4574 / FGSC 10173) (Glume blotch fungus).